Consider the following 704-residue polypeptide: CAP-Gly domain-containing linker protein 4 (704 aa).

ANK repeat units follow at residues 65–101, 149–180, and 186–215; these read TSVS…NVND, TNMN…DVDA, and NFGT…NPAF. The region spanning 303 to 345 is the CAP-Gly 1 domain; sequence GTTEFASGQWAGIELDEPEGKNNGSVGRVQYFKCAPKYGIFAP. Residues 353–479 are disordered; it reads KDGRKTTTHT…SATSAANNSH (127 aa). Low complexity-rich tracts occupy residues 360 to 371, 423 to 432, and 440 to 461; these read THTPSTRATPHA, SMSSSSSSSS, and PKKL…SLPS. Residues 504–546 enclose the CAP-Gly 2 domain; that stretch reads GTTNFAPGYWYGIELEKPHGKNDGSVGGVQYFSCSPRYGIFAP. Phosphoserine is present on residues serine 556 and serine 608. The CAP-Gly 3 domain occupies 643-685; the sequence is GPTDFASGIWLGLELRSAKGKNDGAVGDKRYFTCKPNYGVLVR.

The polypeptide is CAP-Gly domain-containing linker protein 4 (Clip4) (Mus musculus (Mouse)).